The following is a 505-amino-acid chain: UDP-N-acetylmuramate--L-alanine ligase (505 aa).

164–170 (GTHGKTT) contacts ATP.

This sequence belongs to the MurCDEF family.

It is found in the cytoplasm. It carries out the reaction UDP-N-acetyl-alpha-D-muramate + L-alanine + ATP = UDP-N-acetyl-alpha-D-muramoyl-L-alanine + ADP + phosphate + H(+). Its pathway is cell wall biogenesis; peptidoglycan biosynthesis. Its function is as follows. Cell wall formation. This chain is UDP-N-acetylmuramate--L-alanine ligase, found in Synechocystis sp. (strain ATCC 27184 / PCC 6803 / Kazusa).